The primary structure comprises 217 residues: Phosphatidylserine decarboxylase proenzyme (217 aa).

The active-site Schiff-base intermediate with substrate; via pyruvic acid is Ser183. A Pyruvic acid (Ser); by autocatalysis modification is found at Ser183.

This sequence belongs to the phosphatidylserine decarboxylase family. PSD-A subfamily. In terms of assembly, heterodimer of a large membrane-associated beta subunit and a small pyruvoyl-containing alpha subunit. Pyruvate serves as cofactor. Is synthesized initially as an inactive proenzyme. Formation of the active enzyme involves a self-maturation process in which the active site pyruvoyl group is generated from an internal serine residue via an autocatalytic post-translational modification. Two non-identical subunits are generated from the proenzyme in this reaction, and the pyruvate is formed at the N-terminus of the alpha chain, which is derived from the carboxyl end of the proenzyme. The post-translation cleavage follows an unusual pathway, termed non-hydrolytic serinolysis, in which the side chain hydroxyl group of the serine supplies its oxygen atom to form the C-terminus of the beta chain, while the remainder of the serine residue undergoes an oxidative deamination to produce ammonia and the pyruvoyl prosthetic group on the alpha chain.

Its subcellular location is the cell membrane. It catalyses the reaction a 1,2-diacyl-sn-glycero-3-phospho-L-serine + H(+) = a 1,2-diacyl-sn-glycero-3-phosphoethanolamine + CO2. It participates in phospholipid metabolism; phosphatidylethanolamine biosynthesis; phosphatidylethanolamine from CDP-diacylglycerol: step 2/2. Catalyzes the formation of phosphatidylethanolamine (PtdEtn) from phosphatidylserine (PtdSer). The chain is Phosphatidylserine decarboxylase proenzyme from Cupriavidus metallidurans (strain ATCC 43123 / DSM 2839 / NBRC 102507 / CH34) (Ralstonia metallidurans).